The following is a 556-amino-acid chain: Oxygen-dependent choline dehydrogenase (556 aa).

Residue 4–33 coordinates FAD; the sequence is DYIIIGAGSAGNVLATRLTEDPNTTVLLLE. The active-site Proton acceptor is histidine 473.

This sequence belongs to the GMC oxidoreductase family. The cofactor is FAD.

The enzyme catalyses choline + A = betaine aldehyde + AH2. The catalysed reaction is betaine aldehyde + NAD(+) + H2O = glycine betaine + NADH + 2 H(+). It functions in the pathway amine and polyamine biosynthesis; betaine biosynthesis via choline pathway; betaine aldehyde from choline (cytochrome c reductase route): step 1/1. Involved in the biosynthesis of the osmoprotectant glycine betaine. Catalyzes the oxidation of choline to betaine aldehyde and betaine aldehyde to glycine betaine at the same rate. This is Oxygen-dependent choline dehydrogenase from Escherichia coli O127:H6 (strain E2348/69 / EPEC).